A 520-amino-acid chain; its full sequence is Non-specific phospholipase C6 (520 aa).

A signal peptide spans 1–31; sequence MKPSSASRFSLTFSHFLTLYCLLTQTHVAQG.

The protein belongs to the bacterial phospholipase C family. In terms of tissue distribution, expressed in roots, leaves, stems, flowers and siliques.

It is found in the secreted. The polypeptide is Non-specific phospholipase C6 (NPC6) (Arabidopsis thaliana (Mouse-ear cress)).